Here is a 155-residue protein sequence, read N- to C-terminus: Riboflavin kinase (155 aa).

4 residues coordinate ATP: G15, K21, T27, and N29. Positions 27 and 29 each coordinate Mg(2+). The active-site Nucleophile is the E79. Residues I82, H84, and Y91 each coordinate ATP. FMN-binding residues include R104, K107, and F109.

As to quaternary structure, monomer. Directly interacts with TNFRSF1A death domain. TNFRSF1A-binding may be supported by TRADD. In the absence of TNFRSF1A, interacts with TRADD. Independently of TNFRSF1A, interacts with the NADPH oxidase subunit CYBA. The cofactor is Zn(2+). It depends on Mg(2+) as a cofactor. As to expression, detected in brain, placenta and urinary bladder.

The protein localises to the cytoplasm. The enzyme catalyses riboflavin + ATP = FMN + ADP + H(+). The protein operates within cofactor biosynthesis; FMN biosynthesis; FMN from riboflavin (ATP route): step 1/1. Functionally, catalyzes the phosphorylation of riboflavin (vitamin B2) to form flavin-mononucleotide (FMN), hence rate-limiting enzyme in the synthesis of FAD. Essential for TNF-induced reactive oxygen species (ROS) production. Through its interaction with both TNFRSF1A and CYBA, physically and functionally couples TNFRSF1A to NADPH oxidase. TNF-activation of RFK may enhance the incorporation of FAD in NADPH oxidase, a critical step for the assembly and activation of NADPH oxidase. This is Riboflavin kinase (RFK) from Homo sapiens (Human).